The following is a 170-amino-acid chain: Adenine phosphoribosyltransferase (170 aa).

Belongs to the purine/pyrimidine phosphoribosyltransferase family. Homodimer.

The protein resides in the cytoplasm. The enzyme catalyses AMP + diphosphate = 5-phospho-alpha-D-ribose 1-diphosphate + adenine. The protein operates within purine metabolism; AMP biosynthesis via salvage pathway; AMP from adenine: step 1/1. In terms of biological role, catalyzes a salvage reaction resulting in the formation of AMP, that is energically less costly than de novo synthesis. The protein is Adenine phosphoribosyltransferase of Cenarchaeum symbiosum (strain A).